We begin with the raw amino-acid sequence, 750 residues long: Elastin (750 aa).

Positions 1-24 (ARQAAAPLLPGVLLLFSILPASQQ) are cleaved as a signal peptide. 4-hydroxyproline is present on residues P32, P67, P102, P176, P189, P192, and P211. Repeat unit 1 spans residues 83–127 (GAGVGGLGAGLGAFPGAAFPGAASAAALKAAAKAGAGLGGVGGIG). The segment at 83 to 686 (GAGVGGLGAG…GVGGLGVGGL (604 aa)) is 8 X tandem repeats. Repeat copies occupy residues 219–262 (VNGL…AGVL), 263–318 (PGAG…GVPG), 319–393 (VVPG…VPGV), 394–482 (PGVP…VPGV), 483–554 (GVPG…VGGL), 555–619 (VPGV…PGVT), and 620–686 (PGVG…VGGL). 4-hydroxyproline occurs at positions 276, 345, 363, 368, 441, 455, and 480. 3 positions are modified to 4-hydroxyproline: P576, P635, and P720. C739 and C745 are joined by a disulfide.

It belongs to the elastin family. As to quaternary structure, the polymeric elastin chains are cross-linked together into an extensible 3D network. Post-translationally, elastin is formed through the cross-linking of its soluble precursor tropoelastin. Cross-linking is initiated through the action of lysyl oxidase on exposed lysines to form allysine. Subsequent spontaneous condensation reactions with other allysine or unmodified lysine residues result in various bi-, tri-, and tetrafunctional cross-links. The most abundant cross-links in mature elastin fibers are lysinonorleucine, allysine aldol, desmosine, and isodesmosine. Hydroxylated on proline residues. In terms of processing, hydroxylation on proline residues within the sequence motif, GXPG, is most likely to be 4-hydroxy as this fits the requirement for 4-hydroxylation in vertebrates.

Its subcellular location is the secreted. The protein resides in the extracellular space. It localises to the extracellular matrix. Functionally, major structural protein of tissues such as aorta and nuchal ligament, which must expand rapidly and recover completely. The protein is Elastin (ELN) of Gallus gallus (Chicken).